We begin with the raw amino-acid sequence, 372 residues long: Probable leucine aminopeptidase MCYG_03459 (372 aa).

Residues 1-18 (MKISTLAVVSAFAVTAIA) form the signal peptide. Residue Asn95 is glycosylated (N-linked (GlcNAc...) asparagine). Residues His175 and Asp194 each coordinate Zn(2+). Asn195 and Asn219 each carry an N-linked (GlcNAc...) asparagine glycan. Zn(2+) contacts are provided by Glu233 and Asp260. Cys305 and Cys309 are oxidised to a cystine. Position 338 (His338) interacts with Zn(2+).

Belongs to the peptidase M28 family. M28E subfamily. In terms of assembly, monomer. Zn(2+) is required as a cofactor.

It is found in the secreted. Functionally, probable extracellular aminopeptidase which contributes to pathogenicity. This chain is Probable leucine aminopeptidase MCYG_03459, found in Arthroderma otae (strain ATCC MYA-4605 / CBS 113480) (Microsporum canis).